The chain runs to 688 residues: Eukaryotic translation initiation factor 3 subunit B (688 aa).

The segment at 1-32 is disordered; sequence MAKKKGENYDSDGGDDQDYDEEPNFDDPEGFV. The span at 9-32 shows a compositional bias: acidic residues; it reads YDSDGGDDQDYDEEPNFDDPEGFV. Residues 57–141 form the RRM domain; it reads NVIVVDNIPV…HTLLVNLFSD (85 aa). WD repeat units follow at residues 208–246, 247–287, 291–329, 332–367, 440–482, and 527–572; these read RDRFTETYVKWSPLGTYIVTFHKQGVVIWGGSNFTKINK, FPHS…EKRS, DGTSNMSMFRWSHDDKYVARMGDNAIHVYETSTFYLLDK, IKVQGIRNFSWSPTDNIIAYWMSEDLEAPARVTLLE, EVKE…EPTM, and GDHF…KRVN. Residues 613-642 adopt a coiled-coil conformation; that stretch reads RIRMTRASKELLEKRAKLREQFVEYRTKRV.

This sequence belongs to the eIF-3 subunit B family. As to quaternary structure, component of the eukaryotic translation initiation factor 3 (eIF-3) complex.

It localises to the cytoplasm. Its function is as follows. RNA-binding component of the eukaryotic translation initiation factor 3 (eIF-3) complex, which is involved in protein synthesis of a specialized repertoire of mRNAs and, together with other initiation factors, stimulates binding of mRNA and methionyl-tRNAi to the 40S ribosome. The eIF-3 complex specifically targets and initiates translation of a subset of mRNAs involved in cell proliferation. The protein is Eukaryotic translation initiation factor 3 subunit B of Aedes aegypti (Yellowfever mosquito).